A 250-amino-acid chain; its full sequence is Nuclear transcription factor Y subunit C-4 (250 aa).

The interval 219–250 (GIAYGGQQGHPGYLWQDPQEQQEEPPAEQQSD) is disordered. Residues 238–250 (EQQEEPPAEQQSD) are compositionally biased toward acidic residues.

Belongs to the NFYC/HAP5 subunit family. As to quaternary structure, heterotrimeric transcription factor composed of three components, NF-YA, NF-YB and NF-YC. NF-YB and NF-YC must interact and dimerize for NF-YA association and DNA binding. Interacts with NFYB2. Interacts with NFYB8, NFYB10 and HD5/NFYB11.

The protein localises to the nucleus. It localises to the cytoplasm. Functionally, probable transcription factor involved in the regulation of flowering time under long day (LD) conditions. Functions as a repressor of flowering, independently of HD1 and GHD7. Controls flowering time by negatively regulating the expression of EHD1 and HD3A. Component of the NF-Y/HAP transcription factor complex. This is Nuclear transcription factor Y subunit C-4 from Oryza sativa subsp. japonica (Rice).